We begin with the raw amino-acid sequence, 557 residues long: Formate--tetrahydrofolate ligase (557 aa).

T67 to T74 provides a ligand contact to ATP.

The protein belongs to the formate--tetrahydrofolate ligase family.

It catalyses the reaction (6S)-5,6,7,8-tetrahydrofolate + formate + ATP = (6R)-10-formyltetrahydrofolate + ADP + phosphate. It participates in one-carbon metabolism; tetrahydrofolate interconversion. The sequence is that of Formate--tetrahydrofolate ligase from Cereibacter sphaeroides (strain ATCC 17025 / ATH 2.4.3) (Rhodobacter sphaeroides).